The sequence spans 644 residues: MEAERGPERRPAERSSPGQTPEEGAQALAEFAALHGPALRASGVPERYWGRLLHKLEHEVFDAGEVFGIMQVEEVEEEEDEAAREVRKQQPNPGNELCYKVIVTRESGLQAAHPNSIFLIDHAWTCRVEHARQQLQQVPGLLHRMANLMGIEFHGELPSTEAVALVLEEMWKFNQTYQLAHGTAEEKMPVWYIMDEFGSRIQHADVPSFATAPFFYMPQQVAYTLLWPLRDLDTGEEVTRDFAYGETDPLIRKCMLLPWAPTDMLDLSSCTPEPPAEHYQAILEENKEKLPLDINPVVHPHGHIFKVYTDVQQVASSLTHPRFTLTQSEADADILFNFSHFKDYRKLSQERPGVLLNQFPCENLLTVKDCLASIARRAGGPEGPPWLPRTFNLRTELPQFVSYFQQRERWGEDNHWICKPWNLARSLDTHVTKSLHSIIRHRESTPKVVSKYIESPVLFLREDVGKVKFDIRYIVLLRSVRPLRLFVYDVFWLRFSNRAFALNDLDDYEKHFTVMNYDPDVVLKQVHCEEFIPEFEKQYPEFPWTDVQAEIFRAFTELFQVACAKPPPLGLCDYPSSRAMYAVDLMLKWDNGPDGRRVMQPQILEVNFNPDCERACRYHPTFFNDVFSTLFLDQPGGCHVTCLV.

A compositionally biased stretch (basic and acidic residues) spans M1 to E13. A disordered region spans residues M1 to A25. A TTL domain is found at P300 to V644. Residues S450–I453, K468, and D470 contribute to the ATP site.

The protein belongs to the tubulin--tyrosine ligase family. Interacts with MAVS; the interaction prevents MAVS binding to TBK1 and IKBKE. Interacts (via N-terminus) with TBK1 (via protein kinase domain). Interacts (via TTL domain) with IKBKE (via protein kinase domain). Interacts with tubulin alpha. Interacts with histone H3 and histone H4 (when trimethylated at 'Lys-20' (H4K20me3)). Interacts with CBX3. In terms of tissue distribution, expressed in the basal layer of prostate and endothelial cells. Increased expression in prostatic intraepithelial neoplasia and metastatic lesions.

It localises to the cytoplasm. The protein localises to the midbody. It is found in the cytoskeleton. Its subcellular location is the microtubule organizing center. The protein resides in the centrosome. It localises to the spindle. The protein localises to the nucleus. Its function is as follows. Negatively regulates post-translational modifications of tubulin, including detyrosination of the C-terminus and polyglutamylation of glutamate residues. Also, indirectly promotes histone H4 trimethylation at 'Lys-20' (H4K20me3). Probably by controlling tubulin and/or histone H4 post-translational modifications, plays a role in mitosis and in maintaining chromosome number stability. During RNA virus-mediated infection, acts as a negative regulator of the RIG-I pathway by preventing MAVS binding to TBK1 and IKBKE. The chain is Tubulin--tyrosine ligase-like protein 12 (TTLL12) from Homo sapiens (Human).